We begin with the raw amino-acid sequence, 344 residues long: MKFLDEAKVYVRSGDGGPGCVSFRREKFIEFGGPNGGDGGRGGDVWIECVQGLNTLIDYRYRQHFKAKKGEHGMGSNCHGAKGDDAVLQVPAGTQVFAEDGETLIADMTEVGQRVRLAKGGNGGFGNAYFTTSTNRAPRHANPGLEGQEMWLILRLKLIADAGLVGLPNAGKSTFLATVTAAKPKIADYPFTTLHPGLGVVRSDEREFVLADIPGLIEGAHEGVGLGDRFLAHVERCRVLLHLVEGTSEHAGKAYKLVRRELEAYGEGLSDKPEIVALSKADALDADTLKQQLARLKRAAGGKPLVLSAASGQGVQEALRAIQAQLDTQGAEEAEAQPAEPWQP.

The 159-residue stretch at 1-159 (MKFLDEAKVY…MWLILRLKLI (159 aa)) folds into the Obg domain. The OBG-type G domain maps to 160–327 (ADAGLVGLPN…ALRAIQAQLD (168 aa)). GTP is bound by residues 166–173 (GLPNAGKS), 191–195 (FTTLH), 212–215 (DIPG), 279–282 (SKAD), and 308–310 (SAA). Mg(2+)-binding residues include S173 and T193.

The protein belongs to the TRAFAC class OBG-HflX-like GTPase superfamily. OBG GTPase family. In terms of assembly, monomer. It depends on Mg(2+) as a cofactor.

The protein resides in the cytoplasm. In terms of biological role, an essential GTPase which binds GTP, GDP and possibly (p)ppGpp with moderate affinity, with high nucleotide exchange rates and a fairly low GTP hydrolysis rate. Plays a role in control of the cell cycle, stress response, ribosome biogenesis and in those bacteria that undergo differentiation, in morphogenesis control. The chain is GTPase Obg from Methylorubrum extorquens (strain CM4 / NCIMB 13688) (Methylobacterium extorquens).